The chain runs to 57 residues: Protein translocase subunit SecE (57 aa).

Residues 30 to 50 (LIAGAGIVFVGFLGFLIFAIM) traverse the membrane as a helical segment.

Belongs to the SecE/SEC61-gamma family. Component of the Sec protein translocase complex. Heterotrimer consisting of SecY (alpha), SecG (beta) and SecE (gamma) subunits. The heterotrimers can form oligomers, although 1 heterotrimer is thought to be able to translocate proteins. Interacts with the ribosome. May interact with SecDF, and other proteins may be involved.

The protein localises to the cell membrane. Its function is as follows. Essential subunit of the Sec protein translocation channel SecYEG. Clamps together the 2 halves of SecY. May contact the channel plug during translocation. The chain is Protein translocase subunit SecE from Haloquadratum walsbyi (strain DSM 16790 / HBSQ001).